Consider the following 945-residue polypeptide: Collagen-like protein 1 (945 aa).

Disordered regions lie at residues 80–226 (SLKG…SPDL) and 257–441 (GEKG…DKGE). Collagen-like domains follow at residues 83 to 142 (GDPG…QGDK) and 146 to 205 (GDVG…KGDK). Basic and acidic residues-rich tracts occupy residues 109–145 (QGTK…KGDQ) and 168–208 (DQGD…KGDK). Residue Asn-211 is glycosylated (N-linked (GlcNAc...) asparagine; by host). 5 consecutive Collagen-like domains span residues 257 to 376 (GEKG…KGDK), 383 to 442 (GDKG…KGEN), 488 to 547 (GEKG…VGDK), 554 to 613 (GDKG…KGDV), and 635 to 694 (GDKG…VGAS). The N-linked (GlcNAc...) asparagine; by host glycan is linked to Asn-442. A compositionally biased stretch (basic and acidic residues) spans 488–687 (GEKGDKGDTG…DKGDKGDKGD (200 aa)). The segment at 488-712 (GEKGDKGDTG…SPTTGENGDS (225 aa)) is disordered. Residues 703 to 712 (SPTTGENGDS) show a composition bias toward polar residues. Residue Asn-716 is glycosylated (N-linked (GlcNAc...) asparagine; by host). Positions 733–768 (TNIKGDKGDKGDKGDKGDKGDTGDVGLKGDTGTPGS) are disordered. The span at 736-754 (KGDKGDKGDKGDKGDKGDT) shows a compositional bias: basic and acidic residues. Low complexity predominate over residues 756–765 (DVGLKGDTGT).

In terms of processing, may be hydroxylated on lysine by the viral-encoded procollagen-lysine,2-oxoglutarate 5-dioxygenase.

Its subcellular location is the virion. Its function is as follows. May participate in the formation of a layer of cross-linked glycosylated fibrils at the viral surface thus giving it a hairy-like appearance. The chain is Collagen-like protein 1 from Acanthamoeba polyphaga mimivirus (APMV).